Consider the following 389-residue polypeptide: Galactokinase (389 aa).

A substrate-binding site is contributed by E34–D37. ATP contacts are provided by residues S68 and G125–S131. Mg(2+) is bound by residues S131 and E163. D175 serves as the catalytic Proton acceptor. Position 225 (Y225) interacts with substrate.

It belongs to the GHMP kinase family. GalK subfamily.

The protein localises to the cytoplasm. It carries out the reaction alpha-D-galactose + ATP = alpha-D-galactose 1-phosphate + ADP + H(+). Its pathway is carbohydrate metabolism; galactose metabolism. Catalyzes the transfer of the gamma-phosphate of ATP to D-galactose to form alpha-D-galactose-1-phosphate (Gal-1-P). This is Galactokinase from Clostridium acetobutylicum (strain ATCC 824 / DSM 792 / JCM 1419 / IAM 19013 / LMG 5710 / NBRC 13948 / NRRL B-527 / VKM B-1787 / 2291 / W).